A 214-amino-acid chain; its full sequence is Thymidylate kinase (214 aa).

10-17 (GPDGAGKT) contributes to the ATP binding site.

Belongs to the thymidylate kinase family.

It carries out the reaction dTMP + ATP = dTDP + ADP. Functionally, phosphorylation of dTMP to form dTDP in both de novo and salvage pathways of dTTP synthesis. The sequence is that of Thymidylate kinase from Limosilactobacillus fermentum (strain NBRC 3956 / LMG 18251) (Lactobacillus fermentum).